A 98-amino-acid chain; its full sequence is Integration host factor subunit beta (98 aa).

This sequence belongs to the bacterial histone-like protein family. As to quaternary structure, heterodimer of an alpha and a beta chain.

This protein is one of the two subunits of integration host factor, a specific DNA-binding protein that functions in genetic recombination as well as in transcriptional and translational control. The protein is Integration host factor subunit beta of Pseudomonas fluorescens (strain SBW25).